Here is a 424-residue protein sequence, read N- to C-terminus: MPLLWLRGFLLASCWIIVRSSPTPGSGGHSAAPDCPSCALATLPKDVPNSQPEMVEAVKKHILNMLHLKKRPDVTQPVPKAALLNAIRKLHVGKVGENGYVELEDDIGRRAEMNELMEQTSEIITFAEAGTARKTLRFEISKEGSDLSVVERAEIWLFLKVPKANRTRTKVSIRLFQQQRRPQGSADAGEEAEDVGFPEEKSEVLISEKVVDARKSTWHIFPVSSSIQRLLDQGKSALDIRTACEQCHETGASLVLLGKKKKKEEEAEGRKRDGEGAGVDEEKEQSHRPFLMLQARQSEEHPHRRRRRGLECDGKVNICCKKQFFVSFKDIGWNDWIIAPSGYHANYCEGECPSHIAGTSGSSLSFHSTVINHYRMRGHSPFANLKSCCVPTKLRPMSMLYYDDGQNIIKKDIQNMIVEECGCS.

The signal sequence occupies residues 1-20; the sequence is MPLLWLRGFLLASCWIIVRS. A propeptide spanning residues 21-308 is cleaved from the precursor; sequence SPTPGSGGHS…EEHPHRRRRR (288 aa). Asn165 carries N-linked (GlcNAc...) asparagine glycosylation. Disordered regions lie at residues 178–197 and 259–306; these read QQRR…DVGF and KKKK…HRRR. Residues 188–197 are compositionally biased toward acidic residues; sequence AGEEAEDVGF. Residues 263–275 show a composition bias toward basic and acidic residues; that stretch reads KEEEAEGRKRDGE. 4 cysteine pairs are disulfide-bonded: Cys312-Cys320, Cys319-Cys389, Cys348-Cys421, and Cys352-Cys423.

Belongs to the TGF-beta family. As to quaternary structure, dimeric, linked by one or more disulfide bonds. Inhibin A is a dimer of alpha/INHA and beta-A/INHBA. Activin A is a homodimer of beta-A/INHBA. Activin AB is a dimer of beta-A/INHBA and beta-B/INHBB. Interacts with FST and FSTL3; these interactions prevent activin A interaction to its type II receptor. Activin A interacts with ACVR2A. Activin A interacts with BMPR2. Inhibin A interacts with ACVR1; this interaction creates a non-signaling complex (NSC) that inhibits ACVR1-mediated BMP signaling. Inhibin A interacts with ACVR2A.

It localises to the secreted. Inhibins/activins are involved in regulating a number of diverse functions such as hypothalamic and pituitary hormone secretion, gonadal hormone secretion, germ cell development and maturation, erythroid differentiation, insulin secretion, nerve cell survival, embryonic axial development or bone growth, depending on their subunit composition. Its function is as follows. Activin A is a homodimer of INHBA that plays a role in several essential biological processes including embryonic development, stem cell maintenance and differentiation, haematopoiesis, cell proliferation and tissue fibrosis. Signals through type I (such as ACVR1B or ACVR1C) and type II receptors (such as ACVR2A, ACVR2B or BMPR2) which, upon ligand binding, phosphorylate SMAD2 and SMAD3 intracellular signaling mediators that form a complex with SMAD4, translocate to the nucleus and modulate gene expression. Can also activate alternative non-canonical intracellular signaling pathways including the p38 MAPK, extracellular signal-regulated kinases 1/2 (ERK1/2) and c-Jun N-terminal kinases (JNKs) to modulate cell migration and differentiation. Alternatively, promotes osteoblastic differentiation via ACVRL1-SMAD1/5/9 pathway. In addition, can engage the type I receptor ACVR1 to form an ACVR1-activin A-type II receptor non-signaling complex (NSC) that renders receptors unavailable for engagement with BMPs, hence resulting in an apparent inhibition of ACVR1-mediated BMP signaling. Functionally, inhibin A is a dimer of alpha/INHA and beta-A/INHBA that functions as a feedback regulator in the hypothalamic-pituitary-gonadal (HPG) axis. Inhibits the secretion of FSH from the anterior pituitary gland by acting on pituitary gonadotrope cells. Antagonizes activin A by binding to the proteoglycan, betaglycan, and forming a stable complex with and, thereby, sequestering type II activin receptors while excluding type I receptor. This chain is Inhibin beta A chain (INHBA), found in Sus scrofa (Pig).